A 467-amino-acid chain; its full sequence is Ribulose bisphosphate carboxylase large chain (467 aa).

K5 carries the post-translational modification N6,N6,N6-trimethyllysine. Substrate contacts are provided by N114 and T164. Catalysis depends on K166, which acts as the Proton acceptor. K168 lines the substrate pocket. Mg(2+) contacts are provided by K192, D194, and E195. The residue at position 192 (K192) is an N6-carboxylysine. Catalysis depends on H285, which acts as the Proton acceptor. The substrate site is built by R286, H318, and S370.

The protein belongs to the RuBisCO large chain family. Type I subfamily. As to quaternary structure, heterohexadecamer of 8 large chains and 8 small chains; disulfide-linked. The disulfide link is formed within the large subunit homodimers. The cofactor is Mg(2+). In terms of processing, the disulfide bond which can form in the large chain dimeric partners within the hexadecamer appears to be associated with oxidative stress and protein turnover.

It is found in the plastid. The protein resides in the chloroplast. It carries out the reaction 2 (2R)-3-phosphoglycerate + 2 H(+) = D-ribulose 1,5-bisphosphate + CO2 + H2O. The enzyme catalyses D-ribulose 1,5-bisphosphate + O2 = 2-phosphoglycolate + (2R)-3-phosphoglycerate + 2 H(+). RuBisCO catalyzes two reactions: the carboxylation of D-ribulose 1,5-bisphosphate, the primary event in carbon dioxide fixation, as well as the oxidative fragmentation of the pentose substrate in the photorespiration process. Both reactions occur simultaneously and in competition at the same active site. The chain is Ribulose bisphosphate carboxylase large chain from Tasmannia insipida (Pepperbush).